A 195-amino-acid chain; its full sequence is Probable molybdenum cofactor guanylyltransferase (195 aa).

GTP-binding positions include 8 to 10, K20, D65, and D96; that span reads LSG. Mg(2+) is bound at residue D96.

It belongs to the MobA family. It depends on Mg(2+) as a cofactor.

It localises to the cytoplasm. It carries out the reaction Mo-molybdopterin + GTP + H(+) = Mo-molybdopterin guanine dinucleotide + diphosphate. Its function is as follows. Transfers a GMP moiety from GTP to Mo-molybdopterin (Mo-MPT) cofactor (Moco or molybdenum cofactor) to form Mo-molybdopterin guanine dinucleotide (Mo-MGD) cofactor. The sequence is that of Probable molybdenum cofactor guanylyltransferase from Bacillus licheniformis (strain ATCC 14580 / DSM 13 / JCM 2505 / CCUG 7422 / NBRC 12200 / NCIMB 9375 / NCTC 10341 / NRRL NRS-1264 / Gibson 46).